The chain runs to 362 residues: Dual-specificity RNA methyltransferase RlmN (362 aa).

The Proton acceptor role is filled by Glu-100. A Radical SAM core domain is found at 106-345 (EPDRNTLCIS…VFIRNSRGED (240 aa)). A disulfide bond links Cys-113 and Cys-350. [4Fe-4S] cluster is bound by residues Cys-120, Cys-124, and Cys-127. S-adenosyl-L-methionine contacts are provided by residues 177-178 (GE), Ser-209, 231-233 (SLH), and Asn-307. Catalysis depends on Cys-350, which acts as the S-methylcysteine intermediate.

The protein belongs to the radical SAM superfamily. RlmN family. The cofactor is [4Fe-4S] cluster.

Its subcellular location is the cytoplasm. It carries out the reaction adenosine(2503) in 23S rRNA + 2 reduced [2Fe-2S]-[ferredoxin] + 2 S-adenosyl-L-methionine = 2-methyladenosine(2503) in 23S rRNA + 5'-deoxyadenosine + L-methionine + 2 oxidized [2Fe-2S]-[ferredoxin] + S-adenosyl-L-homocysteine. The enzyme catalyses adenosine(37) in tRNA + 2 reduced [2Fe-2S]-[ferredoxin] + 2 S-adenosyl-L-methionine = 2-methyladenosine(37) in tRNA + 5'-deoxyadenosine + L-methionine + 2 oxidized [2Fe-2S]-[ferredoxin] + S-adenosyl-L-homocysteine. Its function is as follows. Specifically methylates position 2 of adenine 2503 in 23S rRNA and position 2 of adenine 37 in tRNAs. m2A2503 modification seems to play a crucial role in the proofreading step occurring at the peptidyl transferase center and thus would serve to optimize ribosomal fidelity. The protein is Dual-specificity RNA methyltransferase RlmN of Desulfotalea psychrophila (strain LSv54 / DSM 12343).